We begin with the raw amino-acid sequence, 293 residues long: Prohibitin-2 (293 aa).

Residues 21–41 (FGGGFGLLALGGVGLLALSSL) form a helical; Signal-anchor for type II membrane protein membrane-spanning segment. The stretch at 190 to 235 (GREYAAAIEAKQVAQQEAERARFLVEKALQDKRSIIVKAEGEAQSA) forms a coiled coil.

Belongs to the prohibitin family. In terms of assembly, the mitochondrial prohibitin complex consists of two subunits (PHB1 and PHB2), assembled into a membrane-associated ring-shaped supercomplex of approximately 1 mDa.

It localises to the mitochondrion inner membrane. It is found in the cytoplasm. The protein resides in the nucleus. Its subcellular location is the cell membrane. Protein with pleiotropic attributes mediated in a cell-compartment- and tissue-specific manner, which include the plasma membrane-associated cell signaling functions, mitochondrial chaperone, and transcriptional co-regulator of transcription factors and sex steroid hormones in the nucleus. In terms of biological role, in the mitochondria, together with PHB, forms large ring complexes (prohibitin complexes) in the inner mitochondrial membrane (IMM) and functions as a chaperone protein that stabilizes mitochondrial respiratory enzymes and maintains mitochondrial integrity in the IMM, which is required for mitochondrial morphogenesis, neuronal survival, and normal lifespan. Functionally, in the nucleus, serves as transcriptional co-regulator. The protein is Prohibitin-2 (phbB) of Dictyostelium discoideum (Social amoeba).